A 118-amino-acid polypeptide reads, in one-letter code: Large ribosomal subunit protein bL20 (118 aa).

This sequence belongs to the bacterial ribosomal protein bL20 family.

Its function is as follows. Binds directly to 23S ribosomal RNA and is necessary for the in vitro assembly process of the 50S ribosomal subunit. It is not involved in the protein synthesizing functions of that subunit. The sequence is that of Large ribosomal subunit protein bL20 (rplT) from Thermotoga maritima (strain ATCC 43589 / DSM 3109 / JCM 10099 / NBRC 100826 / MSB8).